Consider the following 246-residue polypeptide: Complement C1q tumor necrosis factor-related protein 3 (246 aa).

The N-terminal stretch at 1-22 (MLGRQRIWWHLLPLLFLPFCLC) is a signal peptide. Residues 51 to 113 (GYQGPPGPPG…KGEKGYPGVP (63 aa)) form the Collagen-like domain. The interval 53-112 (QGPPGPPGPPGIPGNHGNNGNNGATGHEGAKGEKGDKGDLGPRGERGQHGPKGEKGYPGV) is disordered. Residues 55 to 64 (PPGPPGPPGI) show a composition bias toward pro residues. Over residues 65 to 74 (PGNHGNNGNN) the composition is skewed to low complexity. Residues 80 to 107 (EGAKGEKGDKGDLGPRGERGQHGPKGEK) show a composition bias toward basic and acidic residues. The region spanning 113–246 (PPELQIAFMA…FAGFLLFETK (134 aa)) is the C1q domain.

It localises to the secreted. This is Complement C1q tumor necrosis factor-related protein 3 (C1qtnf3) from Mus musculus (Mouse).